A 687-amino-acid chain; its full sequence is Threonine--tRNA ligase (687 aa).

The region spanning 1-67 (MAHLIEAAPN…EQDSKFTPVP (67 aa)) is the TGS domain. The interval 266-572 (DHRRLGAELD…LLEHYAGAFP (307 aa)) is catalytic. Positions 371, 422, and 549 each coordinate Zn(2+).

The protein belongs to the class-II aminoacyl-tRNA synthetase family. Homodimer. Requires Zn(2+) as cofactor.

Its subcellular location is the cytoplasm. It catalyses the reaction tRNA(Thr) + L-threonine + ATP = L-threonyl-tRNA(Thr) + AMP + diphosphate + H(+). In terms of biological role, catalyzes the attachment of threonine to tRNA(Thr) in a two-step reaction: L-threonine is first activated by ATP to form Thr-AMP and then transferred to the acceptor end of tRNA(Thr). Also edits incorrectly charged L-seryl-tRNA(Thr). This chain is Threonine--tRNA ligase, found in Corynebacterium diphtheriae (strain ATCC 700971 / NCTC 13129 / Biotype gravis).